We begin with the raw amino-acid sequence, 447 residues long: tRNA threonylcarbamoyladenosine dehydratase 2 (447 aa).

Transmembrane regions (helical) follow at residues 9–29 (LITATALFTVAVTTITDYAWT), 86–106 (NQYVVVVGAGGVGSWVVNSLV), and 294–314 (ILPVLGTMPSLFGLTITTWIL).

Belongs to the HesA/MoeB/ThiF family.

Its subcellular location is the mitochondrion outer membrane. Its function is as follows. Catalyzes the ATP-dependent dehydration of threonylcarbamoyladenosine at position 37 (t(6)A37) to form cyclic t(6)A37 (ct(6)A37) in tRNAs that read codons beginning with adenine. The polypeptide is tRNA threonylcarbamoyladenosine dehydratase 2 (TCD2) (Saccharomyces cerevisiae (strain ATCC 204508 / S288c) (Baker's yeast)).